The chain runs to 131 residues: Small ribosomal subunit protein uS11 (131 aa).

The segment covering 1-15 has biased composition (basic residues); the sequence is MAAKTVKKTRRRKER. The segment at 1–23 is disordered; it reads MAAKTVKKTRRRKERKNVEHGAA.

Belongs to the universal ribosomal protein uS11 family. In terms of assembly, part of the 30S ribosomal subunit. Interacts with proteins S7 and S18. Binds to IF-3.

In terms of biological role, located on the platform of the 30S subunit, it bridges several disparate RNA helices of the 16S rRNA. Forms part of the Shine-Dalgarno cleft in the 70S ribosome. This chain is Small ribosomal subunit protein uS11, found in Clostridium beijerinckii (strain ATCC 51743 / NCIMB 8052) (Clostridium acetobutylicum).